An 8922-amino-acid polypeptide reads, in one-letter code: Protein clarinet (8922 aa).

The tract at residues 11–35 (SKGPPLEEVREESEEDAQVPEQVVS) is disordered. Residues 19–28 (VREESEEDAQ) show a composition bias toward acidic residues. Residues 385–405 (KDETKLILKSVEDKLETTEIE) are a coiled coil. Disordered regions lie at residues 527–579 (QEAA…EPEL), 622–673 (IVIS…EPEL), 687–860 (LAEK…KEPE), 880–955 (SFEQ…EPEL), 971–1049 (EQSS…EPEL), 1062–1139 (SSAE…MESR), 1151–1331 (IARI…EPEL), 1347–1420 (EQSS…VMES), 1444–1520 (SFEQ…PELT), 1538–1619 (SFEQ…EEID), 1632–1710 (SFEQ…LTQE), 1726–1801 (SFEQ…VPEL), 1820–1898 (SFEQ…LTQE), 1939–1992 (VISE…LTQE), 2032–2084 (IVIS…SELT), 2126–2175 (IVIS…SKEP), 2194–2213 (QSSF…PVRL), 2220–2246 (IVIS…YDQD), 2329–2403 (SFEQ…KKPE), 2423–2497 (SFEQ…KPEL), 2516–2594 (SFEQ…LTQE), 2610–2684 (SFEQ…KEPE), 2704–2845 (SFEQ…ERPF), 2892–2963 (SFEQ…MESK), 2983–3155 (EQSS…EPEL), 3171–3249 (EQSS…EPEL), 3268–3337 (SFEQ…PVML), 3619–3639 (SITP…PTTD), 3995–4079 (AEPV…QEEI), 4117–4169 (IVIS…PELT), 4181–4271 (SLAE…STTI), 4557–4624 (QASA…TQEE), 4636–4656 (EQSS…PVRL), 4666–4685 (SEQH…YERS), 4730–4801 (EQSS…GVTQ), 4855–4899 (PANP…PLQD), 5004–5036 (PEDF…NGLT), 5360–5379 (LAMF…RKES), 5390–5413 (RRSS…DTAL), 5484–5511 (KKQI…ENEV), 5540–5572 (PPIA…SQFG), 6194–6303 (AEPV…ESES), 6354–6437 (DVES…GSRM), 6487–6510 (SSKS…QIGI), 6577–6609 (ARFP…LDDL), 6668–6691 (NAET…SVAR), 6728–6768 (AEFE…VPPG), 6998–7018 (TERK…TSTS), 7045–7098 (ARSR…DDFD), 7137–7175 (FDGD…FEKP), 7202–7263 (EAPS…YPDR), 7313–7350 (KTTT…EIEE), 7598–7623 (DSVR…SPGM), 7760–7797 (TRRH…SRPT), and 7842–7881 (HIRQ…SSSV). The segment covering 531 to 552 (SDNHEKERSSATSKADYERSFD) has biased composition (basic and acidic residues). Residues 760–776 (MESKEPELTQEEIDHIA) are compositionally biased toward basic and acidic residues. Residues 1062–1076 (SSAEQSSFEQASTVP) show a composition bias toward low complexity. Basic and acidic residues predominate over residues 1230–1244 (MESKEPELTQEEIDH). Over residues 1251-1261 (IAEQSSFEQAS) the composition is skewed to polar residues. Composition is skewed to basic and acidic residues over residues 1606-1619 (MESK…EEID) and 1700-1710 (MESKEPELTQE). Basic and acidic residues-rich tracts occupy residues 1888–1898 (MESKEPELTQE) and 1982–1992 (MESKESELTQE). Residues 2194–2204 (QSSFEQASTIT) are compositionally biased toward polar residues. The segment covering 2584-2594 (MESKEPELTQE) has biased composition (basic and acidic residues). Over residues 2772–2788 (MESKEPELTQEEIDHIA) the composition is skewed to basic and acidic residues. Over residues 2793–2803 (LAEQSSFEQAS) the composition is skewed to polar residues. The segment covering 3076–3085 (APSSSFEQAS) has biased composition (polar residues). The segment covering 4035-4044 (GTSFPDNAET) has biased composition (polar residues). Basic and acidic residues predominate over residues 4065–4079 (PVMKSKEPELTQEEI). 3 stretches are compositionally biased toward polar residues: residues 4182–4195 (LAEQ…STIP), 4223–4234 (SATSGADYQQSF), and 4255–4271 (MEST…STTI). Residues 4571–4580 (IVEKREDDKS) are compositionally biased toward basic and acidic residues. Residues 4581–4594 (NITSGADYQQSFDQ) show a composition bias toward polar residues. Positions 4613 to 4624 (MESKEPELTQEE) are enriched in basic and acidic residues. Residues 4636–4645 (EQSSFEQAST) are compositionally biased toward polar residues. Over residues 4730 to 4739 (EQSSFEQAST) the composition is skewed to polar residues. Residues 4871–4890 (EGSSSATSGADIPSSFDISS) are compositionally biased toward low complexity. Positions 5009-5023 (EATSGADTESISETT) are enriched in polar residues. A compositionally biased stretch (low complexity) spans 5390-5407 (RRSSGADSRASNDSSASR). Residues 5486–5499 (QISSRTESTNSRVS) show a composition bias toward polar residues. Pro residues predominate over residues 5540 to 5550 (PPIAISHPTPP). The segment covering 5560 to 5572 (RHSSGSSAHSQFG) has biased composition (low complexity). Composition is skewed to polar residues over residues 6225-6245 (ASSG…TSGF) and 6270-6284 (KTVS…MASR). Basic and acidic residues-rich tracts occupy residues 6285-6303 (KSSE…ESES) and 6376-6422 (GEGE…EESL). The span at 6494–6505 (LGTSAPTKSIPS) shows a compositional bias: polar residues. A compositionally biased stretch (low complexity) spans 6590 to 6600 (SPSVMSSSIMS). Polar residues predominate over residues 6670–6687 (ETDSSSSVITSRQPSRSP). A compositionally biased stretch (low complexity) spans 6735-6747 (SQVPSRQPSRSPS). Composition is skewed to basic and acidic residues over residues 6998–7008 (TERKQREESPT) and 7045–7069 (ARSR…HTPE). Low complexity predominate over residues 7071 to 7086 (SSTAVVTDVPSVSPVT). Residues 7155–7175 (TTKKTSDFDFPKETDEVFEKP) show a composition bias toward basic and acidic residues. Residues 7248 to 7260 (SDEESCSEDDEEY) are compositionally biased toward acidic residues. The span at 7313 to 7331 (KTTTSQTPSTSTKPTVTAP) shows a compositional bias: low complexity. A compositionally biased stretch (basic and acidic residues) spans 7599-7609 (SVRDDNERNEN). Low complexity-rich tracts occupy residues 7777–7788 (SSASRPPSAAGS) and 7854–7880 (AQTG…GSSS). Residues 7895-7915 (KKELKDVLIQRKQRLEATEIE) are a coiled coil. The tract at residues 8510–8562 (SRRRAQETALTSSNKISTGSRSYARRPIRPSSYRNPEATNSMPDRHVARRTAE) is disordered. Composition is skewed to polar residues over residues 8517–8530 (TALT…TGSR) and 8541–8551 (SYRNPEATNSM). The span at 8552 to 8562 (PDRHVARRTAE) shows a compositional bias: basic and acidic residues. Residues 8570–8661 (RILLTRSYKH…EIEMVIRTYK (92 aa)) form the PDZ domain. A C2 domain is found at 8714–8835 (CHGHIQVSLG…SAINTGPRWY (122 aa)).

Expressed in the nervous system.

It is found in the synapse. Its subcellular location is the cell projection. The protein localises to the axon. Functionally, required for synapse development in the active zone of presynaptic terminals of specific neurons including serotonergic NSM neurons. The active zone is a protein-dense neuronal region within the presynaptic bouton, from which synaptic vesicles send neurotransmitter signals across the synapse. Plays a role in the recruitment and clustering of synaptic vesicles in the active zone of presynaptic terminals in serotonergic NSM neurons, and coordinates the release of synaptic vesicles at presynaptic terminals to regulate neurotransmission at neuromuscular junctions. Regulates synapse number in inhibitory motor neurons and plays a role in spontaneous postsynaptic synaptic vesicle release in muscle cells. This chain is Protein clarinet, found in Caenorhabditis elegans.